The sequence spans 560 residues: Formate--tetrahydrofolate ligase (560 aa).

69–76 (TPAGEGKS) lines the ATP pocket.

The protein belongs to the formate--tetrahydrofolate ligase family.

It catalyses the reaction (6S)-5,6,7,8-tetrahydrofolate + formate + ATP = (6R)-10-formyltetrahydrofolate + ADP + phosphate. Its pathway is one-carbon metabolism; tetrahydrofolate interconversion. The polypeptide is Formate--tetrahydrofolate ligase (Listeria monocytogenes serotype 4a (strain HCC23)).